Reading from the N-terminus, the 212-residue chain is Interleukin-6 (212 aa).

A signal peptide spans methionine 1–proline 29. Cysteine 72 and cysteine 78 are joined by a disulfide. N-linked (GlcNAc...) asparagine glycosylation is present at asparagine 73. Serine 81 bears the Phosphoserine mark. Cysteine 101 and cysteine 111 are joined by a disulfide. Asparagine 160 and asparagine 172 each carry an N-linked (GlcNAc...) asparagine glycan.

Belongs to the IL-6 superfamily. Component of a hexamer of two molecules each of IL6, IL6R and IL6ST; first binds to IL6R to associate with the signaling subunit IL6ST. Interacts with IL6R (via the N-terminal ectodomain); this interaction may be affected by IL6R-binding with SORL1, hence decreasing IL6 cis signaling. Interacts with SORL1 (via the N-terminal ectodomain); this interaction leads to IL6 internalization and lysosomal degradation. May form a trimeric complex with the soluble SORL1 ectodomain and soluble IL6R receptor; this interaction might stabilize circulating IL6, hence promoting IL6 trans signaling.

The protein localises to the secreted. Functionally, cytokine with a wide variety of biological functions in immunity, tissue regeneration, and metabolism. Binds to IL6R, then the complex associates to the signaling subunit IL6ST/gp130 to trigger the intracellular IL6-signaling pathway. The interaction with the membrane-bound IL6R and IL6ST stimulates 'classic signaling', whereas the binding of IL6 and soluble IL6R to IL6ST stimulates 'trans-signaling'. Alternatively, 'cluster signaling' occurs when membrane-bound IL6:IL6R complexes on transmitter cells activate IL6ST receptors on neighboring receiver cells. IL6 is a potent inducer of the acute phase response. Rapid production of IL6 contributes to host defense during infection and tissue injury, but excessive IL6 synthesis is involved in disease pathology. In the innate immune response, is synthesized by myeloid cells, such as macrophages and dendritic cells, upon recognition of pathogens through toll-like receptors (TLRs) at the site of infection or tissue injury. In the adaptive immune response, is required for the differentiation of B cells into immunoglobulin-secreting cells. Plays a major role in the differentiation of CD4(+) T cell subsets. Essential factor for the development of T follicular helper (Tfh) cells that are required for the induction of germinal-center formation. Required to drive naive CD4(+) T cells to the Th17 lineage. Also required for proliferation of myeloma cells and the survival of plasmablast cells. In terms of biological role, acts as an essential factor in bone homeostasis and on vessels directly or indirectly by induction of VEGF, resulting in increased angiogenesis activity and vascular permeability. Induces, through 'trans-signaling' and synergistically with IL1B and TNF, the production of VEGF. Involved in metabolic controls, is discharged into the bloodstream after muscle contraction increasing lipolysis and improving insulin resistance. 'Trans-signaling' in central nervous system also regulates energy and glucose homeostasis. Mediates, through GLP-1, crosstalk between insulin-sensitive tissues, intestinal L cells and pancreatic islets to adapt to changes in insulin demand. Also acts as a myokine. Plays a protective role during liver injury, being required for maintenance of tissue regeneration. Also has a pivotal role in iron metabolism by regulating HAMP/hepcidin expression upon inflammation or bacterial infection. Through activation of IL6ST-YAP-NOTCH pathway, induces inflammation-induced epithelial regeneration. The protein is Interleukin-6 (IL6) of Saimiri sciureus (Common squirrel monkey).